We begin with the raw amino-acid sequence, 231 residues long: MAKLTKRQKAIAAKVEAGKAYTFEEAASLLAELSAVKFTESFDVAVNLGVDPRKSDQVVRGATVLPNGTGKTVRVAVFTQGPGAEAALAAGADKVGMDDLAAEMKAGDLNYDVVIASPDAMRVVGQLGQVLGPRGLMPNPKVGTVTPDVATAVKNAKAGQVRFRTDKNGIIHTSVGKVGFEAAALKQNVEALLADLKRLKPSTSKGIYVKRVTLSTTMGPGLIIDQASLDA.

Belongs to the universal ribosomal protein uL1 family. Part of the 50S ribosomal subunit.

Binds directly to 23S rRNA. The L1 stalk is quite mobile in the ribosome, and is involved in E site tRNA release. Its function is as follows. Protein L1 is also a translational repressor protein, it controls the translation of the L11 operon by binding to its mRNA. The polypeptide is Large ribosomal subunit protein uL1 (Ectopseudomonas mendocina (strain ymp) (Pseudomonas mendocina)).